A 390-amino-acid chain; its full sequence is Formamidopyrimidine-DNA glycosylase (390 aa).

Catalysis depends on P2, which acts as the Schiff-base intermediate with DNA. Catalysis depends on E3, which acts as the Proton donor. K60 (proton donor; for beta-elimination activity) is an active-site residue. Residues Y107, R126, K167, and N186 each contribute to the DNA site. The segment at 283-390 is disordered; that stretch reads AEKAAKVRPA…AGKKPKGRKS (108 aa). The segment covering 301–316 has biased composition (acidic residues); sequence DDGDGEEDEQETEKED. The span at 321-337 shows a compositional bias: basic residues; the sequence is SKKGQKPRGGRGKKPAS. Residues 343 to 355 are compositionally biased toward acidic residues; that stretch reads ESDDDGDDSEAEE. The segment covering 360–370 has biased composition (basic residues); that stretch reads PKGRGTKPAIK.

It belongs to the FPG family. In terms of assembly, monomer. As to expression, expressed in leaves (at protein levels).

It is found in the nucleus. The enzyme catalyses Hydrolysis of DNA containing ring-opened 7-methylguanine residues, releasing 2,6-diamino-4-hydroxy-5-(N-methyl)formamidopyrimidine.. It catalyses the reaction 2'-deoxyribonucleotide-(2'-deoxyribose 5'-phosphate)-2'-deoxyribonucleotide-DNA = a 3'-end 2'-deoxyribonucleotide-(2,3-dehydro-2,3-deoxyribose 5'-phosphate)-DNA + a 5'-end 5'-phospho-2'-deoxyribonucleoside-DNA + H(+). Involved in base excision repair of DNA damaged by oxidation or by mutagenic agents. Acts as a DNA glycosylase that recognizes and removes damaged bases. Can process efficiently 4,6-diamino-5-formamidopyrimidine (FapyA), 2,6-diamino-4- hydroxy-5-formamidopyrimidine (FapyG) and the further oxidation products of 8-oxoguanine (8-oxoG), such as guanidinohydantoin and spiroiminodihydantoin. Has marginal activity towards 8-oxoG. Has AP (apurinic/apyrimidinic) lyase activity. Cleaves the DNA backbone by beta-delta elimination to generate a single-strand break at the site of the removed base with both 3'- and 5'-phosphates. The polypeptide is Formamidopyrimidine-DNA glycosylase (FPG1) (Arabidopsis thaliana (Mouse-ear cress)).